Reading from the N-terminus, the 514-residue chain is Peptide chain release factor 3 (514 aa).

The 261-residue stretch at 8 to 268 (KKRRTFAIIS…IFLKFAPEPH (261 aa)) folds into the tr-type G domain. GTP-binding positions include 17-24 (SHPDAGKT), 85-89 (DTPGH), and 139-142 (NKLD).

Belongs to the TRAFAC class translation factor GTPase superfamily. Classic translation factor GTPase family. PrfC subfamily.

It localises to the cytoplasm. Its function is as follows. Increases the formation of ribosomal termination complexes and stimulates activities of RF-1 and RF-2. It binds guanine nucleotides and has strong preference for UGA stop codons. It may interact directly with the ribosome. The stimulation of RF-1 and RF-2 is significantly reduced by GTP and GDP, but not by GMP. The protein is Peptide chain release factor 3 of Streptococcus pneumoniae (strain P1031).